The primary structure comprises 600 residues: Proline--tRNA ligase (600 aa).

The protein belongs to the class-II aminoacyl-tRNA synthetase family. ProS type 1 subfamily. In terms of assembly, homodimer.

The protein resides in the cytoplasm. The catalysed reaction is tRNA(Pro) + L-proline + ATP = L-prolyl-tRNA(Pro) + AMP + diphosphate. Its function is as follows. Catalyzes the attachment of proline to tRNA(Pro) in a two-step reaction: proline is first activated by ATP to form Pro-AMP and then transferred to the acceptor end of tRNA(Pro). As ProRS can inadvertently accommodate and process non-cognate amino acids such as alanine and cysteine, to avoid such errors it has two additional distinct editing activities against alanine. One activity is designated as 'pretransfer' editing and involves the tRNA(Pro)-independent hydrolysis of activated Ala-AMP. The other activity is designated 'posttransfer' editing and involves deacylation of mischarged Ala-tRNA(Pro). The misacylated Cys-tRNA(Pro) is not edited by ProRS. This Acaryochloris marina (strain MBIC 11017) protein is Proline--tRNA ligase.